The chain runs to 209 residues: Redox-sensing transcriptional repressor Rex (209 aa).

Residues 16–55 (LYYRFIQNLSLSGKQRVSSAELSEAVKVDSATIRRDFSYF) constitute a DNA-binding region (H-T-H motif). Position 90-95 (90-95 (GVGNLG)) interacts with NAD(+).

This sequence belongs to the transcriptional regulatory Rex family. Homodimer.

It is found in the cytoplasm. Its function is as follows. Modulates transcription in response to changes in cellular NADH/NAD(+) redox state. In Bacillus cytotoxicus (strain DSM 22905 / CIP 110041 / 391-98 / NVH 391-98), this protein is Redox-sensing transcriptional repressor Rex.